We begin with the raw amino-acid sequence, 171 residues long: 3-hydroxydecanoyl-[acyl-carrier-protein] dehydratase (171 aa).

His70 is a catalytic residue.

Belongs to the thioester dehydratase family. FabA subfamily. As to quaternary structure, homodimer.

It is found in the cytoplasm. The enzyme catalyses a (3R)-hydroxyacyl-[ACP] = a (2E)-enoyl-[ACP] + H2O. The catalysed reaction is (3R)-hydroxydecanoyl-[ACP] = (2E)-decenoyl-[ACP] + H2O. It carries out the reaction (2E)-decenoyl-[ACP] = (3Z)-decenoyl-[ACP]. It participates in lipid metabolism; fatty acid biosynthesis. Necessary for the introduction of cis unsaturation into fatty acids. Catalyzes the dehydration of (3R)-3-hydroxydecanoyl-ACP to E-(2)-decenoyl-ACP and then its isomerization to Z-(3)-decenoyl-ACP. Can catalyze the dehydratase reaction for beta-hydroxyacyl-ACPs with saturated chain lengths up to 16:0, being most active on intermediate chain length. The polypeptide is 3-hydroxydecanoyl-[acyl-carrier-protein] dehydratase (Pseudomonas syringae pv. tomato (strain ATCC BAA-871 / DC3000)).